A 535-amino-acid polypeptide reads, in one-letter code: Probable glucomannan 4-beta-mannosyltransferase 14 (535 aa).

Residues 42–62 (QVVSVLLFVDAAYMAIVVAIV) traverse the membrane as a helical segment. D131 is a catalytic residue. Substrate-binding residues include D193 and D195. Residue D287 is part of the active site. 4 helical membrane passes run 366 to 386 (IVVHIFTFVFYCVILPATVIF), 403 to 423 (ITILNAIATPKSFYLILYWIL), 482 to 502 (IMVGMYLFICGYYDFVFGRTY), and 503 to 523 (LYVYLFLQSIAFFVVGVGYVG).

Belongs to the glycosyltransferase 2 family. Plant cellulose synthase-like A subfamily.

The protein localises to the golgi apparatus membrane. It carries out the reaction GDP-mannose + (glucomannan)n = GDP + (glucomannan)n+1.. Functionally, probable mannan synthase which consists of a 4-beta-mannosyltransferase activity on mannan using GDP-mannose. The beta-1,4-mannan product is the backbone for galactomannan synthesis by galactomannan galactosyltransferase. Galactomannan is a noncellulosic polysaccharides of plant cell wall. The sequence is that of Probable glucomannan 4-beta-mannosyltransferase 14 from Arabidopsis thaliana (Mouse-ear cress).